Here is a 199-residue protein sequence, read N- to C-terminus: MAENENTKKRNRREEILQALAHMLQSSDGSHRITTAKLAANVGVSEAALYRHFPSKTRMFDSLIEFIEDSLISRINLILQDEKDTITRIRLILVLILGFSEKNPGLTRIMTGHALMFEQNRLQGRINQLFERIEVQIRQVLKEKKLRDGQGFSYDESLLASQLLAFCEGMLSRFVRSEFHYRPTQEFEARWPLLLAQLQ.

The region spanning 10–71 (RNRREEILQA…SLIEFIEDSL (62 aa)) is the HTH tetR-type domain. Positions 34–53 (TTAKLAANVGVSEAALYRHF) form a DNA-binding region, H-T-H motif. Residues 120-140 (NRLQGRINQLFERIEVQIRQV) adopt a coiled-coil conformation.

This sequence belongs to the nucleoid occlusion factor SlmA family. In terms of assembly, homodimer. Interacts with FtsZ.

The protein resides in the cytoplasm. It is found in the nucleoid. Functionally, required for nucleoid occlusion (NO) phenomenon, which prevents Z-ring formation and cell division over the nucleoid. Acts as a DNA-associated cell division inhibitor that binds simultaneously chromosomal DNA and FtsZ, and disrupts the assembly of FtsZ polymers. SlmA-DNA-binding sequences (SBS) are dispersed on non-Ter regions of the chromosome, preventing FtsZ polymerization at these regions. This chain is Nucleoid occlusion factor SlmA, found in Photorhabdus laumondii subsp. laumondii (strain DSM 15139 / CIP 105565 / TT01) (Photorhabdus luminescens subsp. laumondii).